A 933-amino-acid chain; its full sequence is Serine/threonine-protein kinase EDR1 (933 aa).

Residues 1 to 10 show a composition bias toward basic residues; that stretch reads MKHIFKKLHR. Disordered regions lie at residues 1–74, 342–424, 527–550, and 604–650; these read MKHI…ADYM, CNSN…TAIG, HRDP…AISS, and HGQQ…YRND. Polar residues predominate over residues 37-48; it reads NPPQATPSSVTE. Positions 53–68 are enriched in low complexity; that stretch reads AGATSSMASPAPTAAS. Residues 342 to 356 are compositionally biased toward polar residues; the sequence is CNSNGNKFPTAQFSN. Over residues 367–378 the composition is skewed to low complexity; the sequence is SSHSSMANYSSS. Over residues 379–389 the composition is skewed to basic and acidic residues; it reads LDRRTEAERTD. Residues 404-413 are compositionally biased toward low complexity; that stretch reads SSPSSVTSST. Positions 533-550 are enriched in polar residues; that stretch reads GNTQSSYATSSSNGAISS. Positions 607–621 are enriched in basic and acidic residues; it reads QNDESHIHDHRKYTS. A Protein kinase domain is found at 669 to 925; sequence LVIAERIGLG…QLTEVLKPLN (257 aa). ATP is bound by residues 675–683 and Lys-696; that span reads IGLGSYGEV. The active-site Proton acceptor is the Asp-792.

Belongs to the protein kinase superfamily. TKL Ser/Thr protein kinase family. RAF subfamily. In terms of assembly, interacts with KEG. Binds and recruited by EDR4 at the powdery mildew (e.g. G.cichoracearum) penetration site on the plasma membrane. In terms of processing, autophosphorylated.

It is found in the cell membrane. It localises to the endosome. The protein localises to the nucleus. Its subcellular location is the endoplasmic reticulum. The protein resides in the golgi apparatus. It is found in the trans-Golgi network. It localises to the early endosome. It carries out the reaction L-seryl-[protein] + ATP = O-phospho-L-seryl-[protein] + ADP + H(+). The enzyme catalyses L-threonyl-[protein] + ATP = O-phospho-L-threonyl-[protein] + ADP + H(+). MAPKKK serine/threonine-protein kinase involved in the regulation of a MAP kinase cascade (probably including MPK3 and MPK6) that negatively regulates salicylic acid- (SA-) dependent defense responses, abscisic acid (ABA) signaling, and ethylene-induced senescence. Also modulates stress response (e.g. drought) signaling and cell death, in an ORE9-dependent manner. Functions at a point of cross talk between ethylene, ABA and SA signaling that impinges on senescence and cell death. On the other hand, it confers sensitivity to various pathogens such as the fungus E.cichoracearum, the oomycete H.parasitica and the bacteria P.syringae pv. tomato DC3000. Required for resistance to some hemibiotrophic/necrotrophic fungal pathogens (e.g. C.gloeosporioides, C.higginsianum and A.brassicicola) through the induction of defensin expression, probably by repressing MYC2, an inhibitor of defensin genes (PDFs). Together with KEG, may regulate endocytic trafficking and/or the formation of signaling complexes on trans-Golgi network (TGN)/ early endosome (EE) vesicles during stress responses. In Arabidopsis thaliana (Mouse-ear cress), this protein is Serine/threonine-protein kinase EDR1 (EDR1).